The primary structure comprises 360 residues: Phenylalanine--tRNA ligase alpha subunit (360 aa).

Residue E264 coordinates Mg(2+).

It belongs to the class-II aminoacyl-tRNA synthetase family. Phe-tRNA synthetase alpha subunit type 1 subfamily. Tetramer of two alpha and two beta subunits. Requires Mg(2+) as cofactor.

It localises to the cytoplasm. The enzyme catalyses tRNA(Phe) + L-phenylalanine + ATP = L-phenylalanyl-tRNA(Phe) + AMP + diphosphate + H(+). The polypeptide is Phenylalanine--tRNA ligase alpha subunit (Streptomyces avermitilis (strain ATCC 31267 / DSM 46492 / JCM 5070 / NBRC 14893 / NCIMB 12804 / NRRL 8165 / MA-4680)).